The following is a 499-amino-acid chain: MCCVCGEQSPDLKNGLQKQSRSARRSASKKWRYQMNSFHYFVIFASGSLFSGLMFGLLNYAPKYVLLPTRSAPHHLPDGKFLQISDEARVMEPYFPAVRMAGRLGDGNNGSGKIRTEPHDTNEQEALSSLKVAIEMKTMGKDDKAARLFQHALALSPKHPEILTKYGEFLEHNQQDVVRADHYYYQALTVNPSHSEALANRQRTAQIVEHLDQKRFERLDQKRDALSSVSDTNMALKRAEKEAYIQHIYHSVGIEGNTMSLAQTRSILETRMAVDGKSIDEHNEILGLDAAMKYINATLVNKNDFITLKDILEIHRRVLGHVDPIEGGEFRRSQVYVGGHVPPGPGDLSILMNHFESWLNSKQAFLFHPVKYAAMAHYKLVHIHPFSDGNGRTSRLLMNTLLMRAGYPPVIIQKQHRHKYYDYLQVANEGDIRPFVRFIADCTERTLDLYLWATSELSHPVPLLAQETMPDGVPLINSFEKESTIEGSGAGEAIRIGTI.

Residues 38-58 (FHYFVIFASGSLFSGLMFGLL) traverse the membrane as a helical segment. TPR repeat units follow at residues 126–159 (ALSS…SPKH) and 160–194 (PEIL…NPSH). An Inhibitory (S/T)XXXE(G/N) motif motif is present at residues 251–256 (SVGIEG). Residues Glu-255 and 337 to 340 (VGGH) each bind ATP. Residues 306-441 (ITLKDILEIH…IRPFVRFIAD (136 aa)) form the Fido domain. Residue His-384 is part of the active site. ATP contacts are provided by residues 388 to 395 (DGNGRTSR), 420 to 421 (YY), and Asn-428.

It belongs to the fic family. Homodimer.

The protein localises to the membrane. The enzyme catalyses L-tyrosyl-[protein] + ATP = O-(5'-adenylyl)-L-tyrosyl-[protein] + diphosphate. The catalysed reaction is L-threonyl-[protein] + ATP = 3-O-(5'-adenylyl)-L-threonyl-[protein] + diphosphate. It catalyses the reaction 3-O-(5'-adenylyl)-L-threonyl-[protein] + H2O = L-threonyl-[protein] + AMP + H(+). Its activity is regulated as follows. The side chain of Glu-255 determines which of the two opposing activities (AMPylase or de-AMPylase) will take place. In response to endoplasmic reticulum stress, mediates de-AMPylase activity. Adenylyltransferase activity is inhibited by the inhibitory helix present at the N-terminus: Glu-255 binds ATP and competes with ATP-binding at Arg-395, thereby preventing adenylyltransferase activity. In unstressed cells, disengagement of Glu-255 promotes adenylyltransferase activity. Activation dissociates ATP-binding from Glu-255, allowing ordered binding of the entire ATP moiety with the alpha-phosphate in an orientation that is productive for accepting an incoming target hydroxyl side chain. Functionally, protein that can both mediate the addition of adenosine 5'-monophosphate (AMP) to specific residues of target proteins (AMPylation), and the removal of the same modification from target proteins (de-AMPylation), depending on the context. The side chain of Glu-255 determines which of the two opposing activities (AMPylase or de-AMPylase) will take place. Acts as a key regulator of the unfolded protein response (UPR) by mediating AMPylation or de-AMPylation of Hsc70-3/BiP. In unstressed cells, acts as an adenylyltransferase by mediating AMPylation of Hsc70-3/BiP at 'Thr-518', thereby inactivating it. In response to endoplasmic reticulum stress, acts as a phosphodiesterase by mediating removal of ATP (de-AMPylation) from Hsc70-3/BiP at 'Thr-518', leading to restore HSPA5/BiP activity. The protein is Protein adenylyltransferase Fic of Aedes aegypti (Yellowfever mosquito).